Reading from the N-terminus, the 216-residue chain is Deoxyribose-phosphate aldolase (216 aa).

Catalysis depends on Asp89, which acts as the Proton donor/acceptor. Lys152 acts as the Schiff-base intermediate with acetaldehyde in catalysis. Catalysis depends on Lys181, which acts as the Proton donor/acceptor.

It belongs to the DeoC/FbaB aldolase family. DeoC type 1 subfamily.

The protein resides in the cytoplasm. It catalyses the reaction 2-deoxy-D-ribose 5-phosphate = D-glyceraldehyde 3-phosphate + acetaldehyde. It participates in carbohydrate degradation; 2-deoxy-D-ribose 1-phosphate degradation; D-glyceraldehyde 3-phosphate and acetaldehyde from 2-deoxy-alpha-D-ribose 1-phosphate: step 2/2. Its function is as follows. Catalyzes a reversible aldol reaction between acetaldehyde and D-glyceraldehyde 3-phosphate to generate 2-deoxy-D-ribose 5-phosphate. The protein is Deoxyribose-phosphate aldolase of Clostridium tetani (strain Massachusetts / E88).